The primary structure comprises 217 residues: MKIAIPITDENFDEVLLKARNADILEFRVDSFTNKDISFVSGLLKKAKENGFETILTIRSEKEGGAYVENRVEMFEKLMPLSDYTDIELSSTDIIAYISRLSKEYNKKLIVSYHNFEMTPANFVIKETIREALRYGDIPKIALKANSYEDVARLMCSAIDIKTPKILISMGEFGKISRIAGFIFGSFISYAYLEKPNAPGQLSLEEMLKLKEMFYLR.

3-dehydroquinate is bound by residues 26 to 28 and R59; that span reads EFR. The active-site Proton donor/acceptor is H114. K140 acts as the Schiff-base intermediate with substrate in catalysis. 3-dehydroquinate-binding residues include R178 and Q201.

It belongs to the type-I 3-dehydroquinase family. As to quaternary structure, homodimer.

The catalysed reaction is 3-dehydroquinate = 3-dehydroshikimate + H2O. It functions in the pathway metabolic intermediate biosynthesis; chorismate biosynthesis; chorismate from D-erythrose 4-phosphate and phosphoenolpyruvate: step 3/7. Functionally, involved in the third step of the chorismate pathway, which leads to the biosynthesis of aromatic amino acids. Catalyzes the cis-dehydration of 3-dehydroquinate (DHQ) and introduces the first double bond of the aromatic ring to yield 3-dehydroshikimate. This chain is 3-dehydroquinate dehydratase, found in Hydrogenobaculum sp. (strain Y04AAS1).